The chain runs to 689 residues: DNA-directed RNA polymerase subunit beta' (689 aa).

Zn(2+) contacts are provided by Cys69, Cys71, Cys87, and Cys90. Positions 489, 491, and 493 each coordinate Mg(2+).

This sequence belongs to the RNA polymerase beta' chain family. RpoC1 subfamily. In terms of assembly, in plastids the minimal PEP RNA polymerase catalytic core is composed of four subunits: alpha, beta, beta', and beta''. When a (nuclear-encoded) sigma factor is associated with the core the holoenzyme is formed, which can initiate transcription. The cofactor is Mg(2+). Requires Zn(2+) as cofactor.

The protein resides in the plastid. The protein localises to the chloroplast. It catalyses the reaction RNA(n) + a ribonucleoside 5'-triphosphate = RNA(n+1) + diphosphate. DNA-dependent RNA polymerase catalyzes the transcription of DNA into RNA using the four ribonucleoside triphosphates as substrates. The chain is DNA-directed RNA polymerase subunit beta' from Lactuca sativa (Garden lettuce).